The sequence spans 313 residues: Short-chain dehydrogenase/reductase family 9C member 7 (313 aa).

29-53 lines the NADP(+) pocket; it reads FITGCDSGFGNLLARQLVDRGMRVL. Ser-160 provides a ligand contact to substrate. Tyr-172 functions as the Proton acceptor in the catalytic mechanism. A Phosphoserine modification is found at Ser-185.

The protein belongs to the short-chain dehydrogenases/reductases (SDR) family.

It is found in the cytoplasm. The catalysed reaction is a N-[omega-(9R,10R)-epoxy-(13R)-hydroxy-(11E)-octadecenoyloxy]acyl-beta-D-glucosyl-(1&lt;-&gt;1)-sphing-4E-enine + NAD(+) = a N-[omega-(9R,10R)-epoxy-13-oxo-(11E)-octadecenoyloxy]acyl-beta-D-glucosyl-(1&lt;-&gt;1)-sphing-4E-enine + NADH + H(+). It carries out the reaction a N-[omega-(9R,10R)-epoxy-(13R)-hydroxy-(11E)-octadecenoyloxy]-acylsphing-4E-enine + NAD(+) = a N-[omega-(9R,10R)-epoxy-13-oxo-(11E)-octadecenoyloxy]-acylsphing-4E-enine + NADH + H(+). In terms of biological role, plays a crucial role in the formation of the epidermal permeability barrier. Catalyzes the NAD+-dependent dehydrogenation of the linoleate 9,10-trans-epoxy-11E-13-alcohol esterified in omega-O-acylceramides (such as in N-[omega-(9R,10R)-epoxy-(13R)-hydroxy-(11E)-octadecenoyloxy]-acylsphing-4E-enine) to the corresponding 13-ketone, the reactive moiety required for binding of epidermal ceramides to proteins. Displays weak conversion of all-trans-retinal to all-trans-retinol in the presence of NADH. Has apparently no steroid dehydrogenase activity. In Bos taurus (Bovine), this protein is Short-chain dehydrogenase/reductase family 9C member 7 (SDR9C7).